Here is a 428-residue protein sequence, read N- to C-terminus: MSLDLPPPPARGCRSTEVLKERGQREVFCGLTGIIWLHRKMQDAFFLVVGSRTCAHLLQSAAGVMIFAEPRFGTAVLEEKDLAGLADANAELDREVDRLLARRPDIRQLFLVGSCPSEVIKLDLHRAAERLSAHHGPAVRVYNFSGSGIETTFTQGEDACLASIVPTLPATEARELLLVGALPDVVEDQAVSLLTQLGIGPVRCLPAHHAAEAPGVGPNTVFALVQPFLGDTHGALTRRGARHIAAPFPFGEEGTTLWLKAIADEFGVSADTFEAVTAAPRARARKAVAAASEGLRGKSVFFLPDSQLEPSLARFLTRECGMSAVEVGTPFLHRGILGPDLDLIAEGPVLSEGQDVERQLDRVRAARPDLTVCGLGLANPLEAEGFTTKWAIELVFTPVHFYEQAGDLAGLFSRPVRRRAILRREAAE.

Residues C29, C54, and C115 each coordinate [4Fe-4S] cluster.

The protein belongs to the BchN/ChlN family. Protochlorophyllide reductase is composed of three subunits; BchL, BchN and BchB. Forms a heterotetramer of two BchB and two BchN subunits. Requires [4Fe-4S] cluster as cofactor.

The catalysed reaction is chlorophyllide a + oxidized 2[4Fe-4S]-[ferredoxin] + 2 ADP + 2 phosphate = protochlorophyllide a + reduced 2[4Fe-4S]-[ferredoxin] + 2 ATP + 2 H2O. The protein operates within porphyrin-containing compound metabolism; bacteriochlorophyll biosynthesis (light-independent). Component of the dark-operative protochlorophyllide reductase (DPOR) that uses Mg-ATP and reduced ferredoxin to reduce ring D of protochlorophyllide (Pchlide) to form chlorophyllide a (Chlide). This reaction is light-independent. The NB-protein (BchN-BchB) is the catalytic component of the complex. The protein is Light-independent protochlorophyllide reductase subunit N of Cereibacter sphaeroides (strain ATCC 17023 / DSM 158 / JCM 6121 / CCUG 31486 / LMG 2827 / NBRC 12203 / NCIMB 8253 / ATH 2.4.1.) (Rhodobacter sphaeroides).